The following is a 206-amino-acid chain: Large ribosomal subunit protein uL4 (206 aa).

The segment at 43 to 94 is disordered; sequence ARSGNRAQKDREQVKHTTKKPWRQKGTGRARAGMSSSPLWRGGGRIFPNSPE. The segment covering 58 to 70 has biased composition (basic residues); sequence HTTKKPWRQKGTG.

Belongs to the universal ribosomal protein uL4 family. Part of the 50S ribosomal subunit.

Functionally, one of the primary rRNA binding proteins, this protein initially binds near the 5'-end of the 23S rRNA. It is important during the early stages of 50S assembly. It makes multiple contacts with different domains of the 23S rRNA in the assembled 50S subunit and ribosome. Forms part of the polypeptide exit tunnel. The polypeptide is Large ribosomal subunit protein uL4 (Polynucleobacter asymbioticus (strain DSM 18221 / CIP 109841 / QLW-P1DMWA-1) (Polynucleobacter necessarius subsp. asymbioticus)).